Consider the following 345-residue polypeptide: MRVAVDAMGGDNAPAIEVEGAVAASRQYGIPIILVGDEDRLRQELDHHAASGLDITIHHASEVVGMHDSASDAVRKKRNSSVRLAFELVKDGQACAAVSAGNSGATMAAGMFVLKRISGIERPAIAQVFPTLEGKTLVLDVGGNVDCKASHLVQFAIMGQVYAKHALGIPNPRIGLLSNGEEDSKGNELTRETNAILRQTSLNYAGYVEGRDIFKGTVEVVVCDGFVGNVVLKLSEGLAEATGTMLKREIMGDMIAKMGYLFMRGAFKRFKKTVDYAEYGGAPLIGINGVGMICHGGSNAKAIKNAIRFAHDYATSGVTQRIAEKLSENYGALFPRTGQSVPPVS.

It belongs to the PlsX family. As to quaternary structure, homodimer. Probably interacts with PlsY.

It is found in the cytoplasm. It carries out the reaction a fatty acyl-[ACP] + phosphate = an acyl phosphate + holo-[ACP]. The protein operates within lipid metabolism; phospholipid metabolism. In terms of biological role, catalyzes the reversible formation of acyl-phosphate (acyl-PO(4)) from acyl-[acyl-carrier-protein] (acyl-ACP). This enzyme utilizes acyl-ACP as fatty acyl donor, but not acyl-CoA. This Trichlorobacter lovleyi (strain ATCC BAA-1151 / DSM 17278 / SZ) (Geobacter lovleyi) protein is Phosphate acyltransferase.